The chain runs to 257 residues: NAD-capped RNA hydrolase NudC (257 aa).

Substrate is bound at residue arginine 69. Zn(2+)-binding residues include cysteine 98 and cysteine 101. Glutamate 111 serves as a coordination point for substrate. Positions 116 and 119 each coordinate Zn(2+). A substrate-binding site is contributed by tyrosine 124. One can recognise a Nudix hydrolase domain in the interval 125-248 (PQIAPCIIVA…TVARRLIEDT (124 aa)). Residues alanine 158, glutamate 174, and glutamate 178 each coordinate a divalent metal cation. Positions 159-180 (GFVEVGETLEQAVAREVMEESG) match the Nudix box motif. 192 to 199 (QPWPFPQS) is a binding site for substrate. Residue glutamate 219 participates in a divalent metal cation binding. Alanine 241 serves as a coordination point for substrate.

It belongs to the Nudix hydrolase family. NudC subfamily. As to quaternary structure, homodimer. Mg(2+) is required as a cofactor. Mn(2+) serves as cofactor. It depends on Zn(2+) as a cofactor.

It carries out the reaction a 5'-end NAD(+)-phospho-ribonucleoside in mRNA + H2O = a 5'-end phospho-adenosine-phospho-ribonucleoside in mRNA + beta-nicotinamide D-ribonucleotide + 2 H(+). The enzyme catalyses NAD(+) + H2O = beta-nicotinamide D-ribonucleotide + AMP + 2 H(+). The catalysed reaction is NADH + H2O = reduced beta-nicotinamide D-ribonucleotide + AMP + 2 H(+). MRNA decapping enzyme that specifically removes the nicotinamide adenine dinucleotide (NAD) cap from a subset of mRNAs by hydrolyzing the diphosphate linkage to produce nicotinamide mononucleotide (NMN) and 5' monophosphate mRNA. The NAD-cap is present at the 5'-end of some mRNAs and stabilizes RNA against 5'-processing. Has preference for mRNAs with a 5'-end purine. Catalyzes the hydrolysis of a broad range of dinucleotide pyrophosphates. This Citrobacter koseri (strain ATCC BAA-895 / CDC 4225-83 / SGSC4696) protein is NAD-capped RNA hydrolase NudC.